The primary structure comprises 513 residues: Proline-rich receptor-like protein kinase PERK3 (513 aa).

Residues 1–123 (MARSNRCVPQ…SPPSPSRLST (123 aa)) are Extracellular-facing. Asn-11 is a glycosylation site (N-linked (GlcNAc...) asparagine). The segment covering 27–36 (LKSRWQQITM) has biased composition (polar residues). Positions 27–119 (LKSRWQQITM…GFSLSPPSPS (93 aa)) are disordered. The N-linked (GlcNAc...) asparagine glycan is linked to Asn-66. Residues 78–89 (PSTSTPPRLGNR) show a composition bias toward low complexity. A compositionally biased stretch (polar residues) spans 99 to 111 (GQEPTTPTMTPGF). Residues 124 to 144 (GAVVGISIGGGVFVLTLIFFL) traverse the membrane as a helical segment. The Cytoplasmic portion of the chain corresponds to 145–513 (CKKKRPRDDK…TAQRYGGDSL (369 aa)). A Phosphothreonine modification is found at Thr-172. A Protein kinase domain is found at 183-334 (FSEANLLGEG…DFGLAKIALD (152 aa)). Residues 189-197 (LGEGGFGFV) and Lys-211 each bind ATP. At Tyr-256 the chain carries Phosphotyrosine. Asp-307 functions as the Proton acceptor in the catalytic mechanism. Residue Ser-340 is modified to Phosphoserine. Phosphothreonine is present on residues Thr-341 and Thr-346. Tyr-354 carries the post-translational modification Phosphotyrosine.

It belongs to the protein kinase superfamily. Ser/Thr protein kinase family. In terms of tissue distribution, expressed at low levels in inflorescence bolt, flower buds, siliques, roots, seedlings and leaves.

Its subcellular location is the cell membrane. It carries out the reaction L-seryl-[protein] + ATP = O-phospho-L-seryl-[protein] + ADP + H(+). The enzyme catalyses L-threonyl-[protein] + ATP = O-phospho-L-threonyl-[protein] + ADP + H(+). In Arabidopsis thaliana (Mouse-ear cress), this protein is Proline-rich receptor-like protein kinase PERK3 (PERK3).